A 982-amino-acid chain; its full sequence is Pentatricopeptide repeat-containing protein At5g62370 (982 aa).

PPR repeat units lie at residues D94–P129, D130–P164, S165–L199, W200–P234, P236–V270, D271–L305, D306–S340, N341–R376, N377–P411, D412–I446, A476–P510, L511–P545, D546–P580, T581–P615, D616–P650, S651–P685, N686–H720, D721–Q755, R759–S789, N793–P827, N828–E858, D860–P894, N895–P929, and R930–L964.

Belongs to the PPR family. P subfamily.

The chain is Pentatricopeptide repeat-containing protein At5g62370 from Arabidopsis thaliana (Mouse-ear cress).